A 245-amino-acid polypeptide reads, in one-letter code: uncharacterized protein (245 aa).

The stretch at 33–176 (QRAAYQQVQA…SSQRDMLTAT (144 aa)) forms a coiled coil.

This is an uncharacterized protein from Mycobacterium tuberculosis (strain CDC 1551 / Oshkosh).